Here is a 107-residue protein sequence, read N- to C-terminus: Heme-degrading monooxygenase (107 aa).

In terms of domain architecture, ABM spans 2–94; sequence IIVTNTAKIT…YILDNKISYY (93 aa). Asn-6 is a binding site for Fe cation. His-76 provides a ligand contact to heme.

It belongs to the antibiotic biosynthesis monooxygenase family. Heme-degrading monooxygenase IsdG subfamily. As to quaternary structure, homodimer.

It is found in the cytoplasm. It carries out the reaction heme b + 3 reduced [NADPH--hemoprotein reductase] + 3 O2 = biliverdin IXalpha + CO + Fe(2+) + 3 oxidized [NADPH--hemoprotein reductase] + 3 H2O + H(+). In terms of biological role, allows bacterial pathogens to use the host heme as an iron source. Catalyzes the oxidative degradation of the heme macrocyclic porphyrin ring to the biliverdin in the presence of a suitable electron donor such as ascorbate or NADPH--cytochrome P450 reductase, with subsequent release of free iron. The polypeptide is Heme-degrading monooxygenase (Bacillus cereus (strain AH187)).